We begin with the raw amino-acid sequence, 83 residues long: Neurotoxin LmNaTx3 (83 aa).

A signal peptide spans 1–21; it reads MQLKIQLLMLVLMIVLTDVYS. Residues 22-83 form the LCN-type CS-alpha/beta domain; it reads KDGFIVSKKN…NIAMKNKNYC (62 aa). 4 disulfides stabilise this stretch: Cys32–Cys83, Cys36–Cys59, Cys45–Cys64, and Cys49–Cys66.

This sequence belongs to the long (4 C-C) scorpion toxin superfamily. Sodium channel inhibitor family. Alpha subfamily. In terms of tissue distribution, expressed by the venom gland.

Its subcellular location is the secreted. In terms of biological role, binds voltage-independently at site-3 of voltage-gated sodium channels (Nav) and inhibits the inactivation of the activated channels, thereby blocking neuronal transmission. In Lychas mucronatus (Chinese swimming scorpion), this protein is Neurotoxin LmNaTx3.